Here is a 671-residue protein sequence, read N- to C-terminus: RNA polymerase sigma factor RpoD (671 aa).

Disordered regions lie at residues 1-45 (MKKK…SKIK) and 229-260 (DDDE…VSEK). Residues 251-260 (EERKKVVSEK) are compositionally biased toward basic and acidic residues. The segment at 436 to 506 (MAKSNLRLVV…SRAIADQART (71 aa)) is sigma-70 factor domain-2. The Interaction with polymerase core subunit RpoC motif lies at 460 to 463 (DLIQ). A sigma-70 factor domain-3 region spans residues 515–591 (DTINRINKVM…DKNIVSSIDH (77 aa)). Residues 604 to 658 (VLDQLNEREKAVIRMRFGLLDDESDRTLEEIGKELNVTRERVRQIESSAIKKLRS) are sigma-70 factor domain-4. Positions 631-650 (LEEIGKELNVTRERVRQIES) form a DNA-binding region, H-T-H motif.

The protein belongs to the sigma-70 factor family. RpoD/SigA subfamily. As to quaternary structure, interacts transiently with the RNA polymerase catalytic core.

The protein localises to the cytoplasm. In terms of biological role, sigma factors are initiation factors that promote the attachment of RNA polymerase to specific initiation sites and are then released. This sigma factor is the primary sigma factor during exponential growth. The chain is RNA polymerase sigma factor RpoD from Helicobacter pylori (strain ATCC 700392 / 26695) (Campylobacter pylori).